The following is a 552-amino-acid chain: Membrane protein insertase YidC (552 aa).

Residues 6-26 (NLLLAAIAAVILMLFIRWNHF) traverse the membrane as a helical segment. Polar residues-rich tracts occupy residues 32–41 (QHQAGNTPAG) and 60–70 (PTASDTPQATA). A disordered region spans residues 32–70 (QHQAGNTPAGSSIAAIAPDSNGDIPSAVPTASDTPQATA). 4 consecutive transmembrane segments (helical) span residues 365–387 (WGLA…SAAS), 431–451 (FGGC…YWVL), 472–492 (MDPY…MQKL), and 508–528 (LPFV…LYWV).

The protein belongs to the OXA1/ALB3/YidC family. Type 1 subfamily. Interacts with the Sec translocase complex via SecD. Specifically interacts with transmembrane segments of nascent integral membrane proteins during membrane integration.

The protein resides in the cell inner membrane. Its function is as follows. Required for the insertion and/or proper folding and/or complex formation of integral membrane proteins into the membrane. Involved in integration of membrane proteins that insert both dependently and independently of the Sec translocase complex, as well as at least some lipoproteins. Aids folding of multispanning membrane proteins. The polypeptide is Membrane protein insertase YidC (Cellvibrio japonicus (strain Ueda107) (Pseudomonas fluorescens subsp. cellulosa)).